A 133-amino-acid polypeptide reads, in one-letter code: Ribosome-binding factor A (133 aa).

This sequence belongs to the RbfA family. In terms of assembly, monomer. Binds 30S ribosomal subunits, but not 50S ribosomal subunits or 70S ribosomes.

Its subcellular location is the cytoplasm. One of several proteins that assist in the late maturation steps of the functional core of the 30S ribosomal subunit. Associates with free 30S ribosomal subunits (but not with 30S subunits that are part of 70S ribosomes or polysomes). Required for efficient processing of 16S rRNA. May interact with the 5'-terminal helix region of 16S rRNA. This Salmonella schwarzengrund (strain CVM19633) protein is Ribosome-binding factor A.